The primary structure comprises 143 residues: Cytochrome c-type biogenesis protein CcmE (143 aa).

Residues 1–8 (MTPVRRRK) lie on the Cytoplasmic side of the membrane. A helical; Signal-anchor for type II membrane protein transmembrane segment spans residues 9–29 (LFILLFALSVLSAAAALVLYA). Topologically, residues 30 to 143 (LRQNISLFYT…KSALADKVKQ (114 aa)) are periplasmic. Heme is bound by residues His-124 and Tyr-128.

Belongs to the CcmE/CycJ family.

Its subcellular location is the cell inner membrane. Its function is as follows. Heme chaperone required for the biogenesis of c-type cytochromes. Transiently binds heme delivered by CcmC and transfers the heme to apo-cytochromes in a process facilitated by CcmF and CcmH. The chain is Cytochrome c-type biogenesis protein CcmE from Legionella pneumophila (strain Lens).